The chain runs to 174 residues: MKILITGRPGSGKSTMVGRLRDYLEGMGFSVGGIITPEVRVGGSRWGFEVVDIASGRRGLLASVETEGPRIGRYGVNVGVMDELAVPAIRRAMLEDDCIIIDEIGPMELKSREFRRTVDEVLSSDVLLIAAVHRKTLQSIKKREDIRVFVVDPEKRDRVYLRIIDLLGDYHGMR.

ATP-binding positions include 7–14 and 98–105; these read GRPGSGKS and CIIIDEIG.

It belongs to the THEP1 NTPase family.

The enzyme catalyses a ribonucleoside 5'-triphosphate + H2O = a ribonucleoside 5'-diphosphate + phosphate + H(+). Functionally, has nucleotide phosphatase activity towards ATP, GTP, CTP, TTP and UTP. May hydrolyze nucleoside diphosphates with lower efficiency. The polypeptide is Nucleoside-triphosphatase THEP1 (Methanothermobacter thermautotrophicus (strain ATCC 29096 / DSM 1053 / JCM 10044 / NBRC 100330 / Delta H) (Methanobacterium thermoautotrophicum)).